The following is a 619-amino-acid chain: Serine/threonine-protein kinase pkn1 (619 aa).

The Protein kinase domain occupies 15-302 (YRILYRKGQS…SSQNLPQAVL (288 aa)). Residue 21–29 (KGQSLWSED) participates in ATP binding. The active-site Proton acceptor is Glu141.

It belongs to the protein kinase superfamily. Ser/Thr protein kinase family. Autophosphorylated on serine and threonine residues.

It carries out the reaction L-seryl-[protein] + ATP = O-phospho-L-seryl-[protein] + ADP + H(+). The enzyme catalyses L-threonyl-[protein] + ATP = O-phospho-L-threonyl-[protein] + ADP + H(+). Functionally, together with the serine/threonine kinase PknD, may play a role in the specific interactions with host proteins during intracellular growth. The chain is Serine/threonine-protein kinase pkn1 (pkn1) from Chlamydia pneumoniae (Chlamydophila pneumoniae).